The chain runs to 183 residues: Hypoxanthine/guanine phosphoribosyltransferase (183 aa).

Belongs to the purine/pyrimidine phosphoribosyltransferase family. Archaeal HPRT subfamily. Homodimer.

Its subcellular location is the cytoplasm. The enzyme catalyses IMP + diphosphate = hypoxanthine + 5-phospho-alpha-D-ribose 1-diphosphate. The catalysed reaction is GMP + diphosphate = guanine + 5-phospho-alpha-D-ribose 1-diphosphate. It functions in the pathway purine metabolism; IMP biosynthesis via salvage pathway; IMP from hypoxanthine: step 1/1. Its function is as follows. Catalyzes a salvage reaction resulting in the formation of IMP that is energically less costly than de novo synthesis. This is Hypoxanthine/guanine phosphoribosyltransferase from Methanocaldococcus vulcanius (strain ATCC 700851 / DSM 12094 / M7) (Methanococcus vulcanius).